A 605-amino-acid chain; its full sequence is Alpha-amylase (605 aa).

The signal sequence occupies residues 1 to 33 (MGVRRSLAALLAALLGCATSLVALTVAASPAHA). The Ca(2+) site is built by Asn130 and Asp189. The active-site Nucleophile is Asp219. A Ca(2+)-binding site is contributed by His223. The active-site Proton donor is Glu253. Positions 500–605 (GDDCTTVTAR…CSQNFYDSWR (106 aa)) constitute a CBM20 domain.

It belongs to the glycosyl hydrolase 13 family. In terms of assembly, monomer. It depends on Ca(2+) as a cofactor.

It carries out the reaction Endohydrolysis of (1-&gt;4)-alpha-D-glucosidic linkages in polysaccharides containing three or more (1-&gt;4)-alpha-linked D-glucose units.. The polypeptide is Alpha-amylase (tam) (Thermomonospora curvata).